We begin with the raw amino-acid sequence, 155 residues long: Small ribosomal subunit protein bS16 (155 aa).

A disordered region spans residues 113 to 155; that stretch reads ADGAPTGEAIQQKKKKAPKKAEAAEAEAPAEEPAAESADAASE. Residues 136-146 are compositionally biased toward acidic residues; the sequence is AEAEAPAEEPA.

This sequence belongs to the bacterial ribosomal protein bS16 family.

This chain is Small ribosomal subunit protein bS16, found in Mycobacteroides abscessus (strain ATCC 19977 / DSM 44196 / CCUG 20993 / CIP 104536 / JCM 13569 / NCTC 13031 / TMC 1543 / L948) (Mycobacterium abscessus).